The sequence spans 139 residues: MRIIGLDVGSKTVGVAVSDPLGFTAQGLEIIPINEAKGEFGFDRLADLVKDYKVEKFVVGLPKNMNNTSGPRVEASQAYGKKIKELFDLPVEYQDERLTTVQAERMLVEQADVSRGKRKKVIDKLAAQLILQNYLDRMF.

Belongs to the YqgF nuclease family.

Its subcellular location is the cytoplasm. In terms of biological role, could be a nuclease involved in processing of the 5'-end of pre-16S rRNA. In Streptococcus mutans serotype c (strain ATCC 700610 / UA159), this protein is Putative pre-16S rRNA nuclease.